A 421-amino-acid polypeptide reads, in one-letter code: Putative bifunctional polynucleotide phosphatase/kinase (421 aa).

A phosphatase region spans residues 25-231; that stretch reads DSYLKGIINN…SENLKTNYKL (207 aa). Residues 235-415 are kinase; sequence NPTEIIDEIE…DDPKWKRSFM (181 aa). Position 265–272 (265–272) interacts with ATP; it reads GQPGSGKS.

This sequence in the N-terminal section; belongs to the DNA 3' phosphatase family.

The enzyme catalyses a 3'end (2'-deoxyribonucleotide 3'-phosphate)-DNA + H2O = a 3'-end 2'-deoxyribonucleotide-DNA + phosphate. The catalysed reaction is a 5'-end dephospho-2'-deoxyribonucleoside-DNA + ATP = a 5'-end 5'-phospho-2'-deoxyribonucleoside-DNA + ADP + H(+). In Acanthamoeba polyphaga mimivirus (APMV), this protein is Putative bifunctional polynucleotide phosphatase/kinase.